The chain runs to 209 residues: Glutathione S-transferase 1, isoform D (209 aa).

The GST N-terminal domain maps to 1–80 (MDFYYLPGSA…YLAEKYGKDD (80 aa)). Glutathione is bound by residues Ser-9, 50 to 52 (HCI), and 64 to 66 (ESR). The GST C-terminal domain occupies 86–207 (DPQKRAVVNQ…AGADEFKAKF (122 aa)).

It belongs to the GST superfamily. Theta family. In terms of assembly, homodimer.

The enzyme catalyses RX + glutathione = an S-substituted glutathione + a halide anion + H(+). It catalyses the reaction 1,1,1-trichloro-2,2-bis(4-chlorophenyl)ethane = 1,1-dichloro-2,2-bis(4-chlorophenyl)ethylene + chloride + H(+). With respect to regulation, inhibited by S-hexylglutathione. Its function is as follows. Conjugation of reduced glutathione to a wide number of exogenous and endogenous hydrophobic electrophiles. Has DDT dehydrochlorinase activity. In Anopheles gambiae (African malaria mosquito), this protein is Glutathione S-transferase 1, isoform D (GstD1).